The primary structure comprises 351 residues: MAGSSFGRLFRITTWGESHGPALGVVIDGCPPGIPLAPEDIQRDLERRRPGKRLTSPRGEPDRVEILSGVFQGVTTGTPISLVIFNRDVRSGDYTELAEVYRPGHGDRTYEQKYGVRDWRGGGRSSGRETAARVAAGAVARKFLAGRGVEVKAYTVAFAGLHVDSFNRDEIDRNPFFCPDATAAAAMERRVEELRDAGDSCGGVVEVSARGCPAGLGEPVFDKLDARLAGALMSVGAVKGVEIGAGFAAAAMLGSENNDPLTPDGYASNNAGGVLAGISTGMDIVARAAVKPIPSISKPQQTVNTRGEPVTLSIKGRHDVSAIPRIVPVCEAMVLLVLADFMLHPAPVEKR.

Residues 39 to 60 (EDIQRDLERRRPGKRLTSPRGE) form a disordered region. Positions 48 and 53 each coordinate NADP(+). FMN is bound by residues 124-126 (RSS), A276, 291-295 (KPIPS), and R317.

The protein belongs to the chorismate synthase family. Homotetramer. The cofactor is FMNH2.

It catalyses the reaction 5-O-(1-carboxyvinyl)-3-phosphoshikimate = chorismate + phosphate. It participates in metabolic intermediate biosynthesis; chorismate biosynthesis; chorismate from D-erythrose 4-phosphate and phosphoenolpyruvate: step 7/7. In terms of biological role, catalyzes the anti-1,4-elimination of the C-3 phosphate and the C-6 proR hydrogen from 5-enolpyruvylshikimate-3-phosphate (EPSP) to yield chorismate, which is the branch point compound that serves as the starting substrate for the three terminal pathways of aromatic amino acid biosynthesis. This reaction introduces a second double bond into the aromatic ring system. This chain is Chorismate synthase, found in Syntrophobacter fumaroxidans (strain DSM 10017 / MPOB).